Reading from the N-terminus, the 587-residue chain is Serine/threonine-protein phosphatase 2A 65 kDa regulatory subunit A beta isoform (587 aa).

S2 carries the N-acetylserine modification. HEAT repeat units lie at residues 2 to 42 (SMID…ALGE), 44 to 80 (RTRKELIPFLSENNDDDDEVLLAMAEELGVFIPYVGG), 81 to 119 (VEYAHVLLPPLETLSTVEETCVREKAVESLCRVGSQMRE), 158 to 196 (DMLKTELRSLYTQLCQDDMPMVRRAAATNLGKFAATVES), 197 to 235 (AHLKTDVMSMFEDLTQDDQDSVRLLAVEGCAALGKLLEP), 236 to 274 (QDCVQHILPVIVNFSQDKSWRVRYMVANQLYELCEAVGP), 275 to 313 (EPTRTELVPAYVRLLRDNEAEVRIAAAGKVTKFCRILNP), 315 to 352 (IAIQHILPCVKELSSDSSQHVRSALASVIMGMAPVLGK), 353 to 391 (DATIEHLLPIFLSLLKDEFPDVRLNIISKLDQVNQVIGI), 393 to 430 (LLSQSLLPAIVELAEDRHWRVRLAIIEYIPLLASQLGV), 432 to 469 (FFDDKLGALCMQWLQDKVHSIRDAAANNLKRLAEEFGP), 470 to 508 (EWAMQHIVPQVLEMVNNPHYLYRMTILRAVSLLAPVMGS), 509 to 547 (EITCSKLLPVVMTASKDRVPNIKFNVAKVLQSLIPIVDQ), and 549 to 586 (VVEKTIRPGLVELSEDPDVDVRFFANQALQSIDNVMMS).

The protein belongs to the phosphatase 2A regulatory subunit A family. As to quaternary structure, PP2A consists of a common heterodimeric core enzyme, composed of a 36 kDa catalytic subunit (subunit C) and a 65 kDa constant regulatory subunit (subunit A), that associates with a variety of regulatory subunits such as subunits B (the R2/B/PR55/B55, R3/B''/PR72/PR130/PR59 and R5/B'/B56 families). Interacts with B'THETA. Interacts with SRK2E/OST1. Interacts with SIC/RON3. In terms of tissue distribution, ubiquitous, with higher levels in roots and flowers (at protein level).

Its subcellular location is the cytoplasm. The protein resides in the cytosol. The protein localises to the nucleus. It localises to the peroxisome. In terms of biological role, the A subunit of protein phosphatase 2A serves as a scaffolding molecule to coordinate the assembly of the catalytic subunit and a variable regulatory B subunit. Involved during developmental process such as seedling and floral developments. Seems to act as a negative regulator of PP2A catalytic activity. Associates with the serine/threonine-protein phosphatase PP2A catalytic subunit C and regulatory subunit B' to positively regulates beta-oxidation of fatty acids and protoauxins in peroxisomes by dephosphorylating peroxisomal beta-oxidation-related proteins. This chain is Serine/threonine-protein phosphatase 2A 65 kDa regulatory subunit A beta isoform (PP2AA2), found in Arabidopsis thaliana (Mouse-ear cress).